The following is a 506-amino-acid chain: Lysine--tRNA ligase (506 aa).

2 residues coordinate Mg(2+): glutamate 415 and glutamate 422.

The protein belongs to the class-II aminoacyl-tRNA synthetase family. As to quaternary structure, homodimer. The cofactor is Mg(2+).

The protein resides in the cytoplasm. It carries out the reaction tRNA(Lys) + L-lysine + ATP = L-lysyl-tRNA(Lys) + AMP + diphosphate. The sequence is that of Lysine--tRNA ligase (lysS) from Buchnera aphidicola subsp. Acyrthosiphon pisum (strain APS) (Acyrthosiphon pisum symbiotic bacterium).